The chain runs to 6733 residues: Replicase polyprotein 1ab (6733 aa).

Residues 1633-1814 (FNQYYEFKVG…QYIEALGVVE (182 aa)) form the Macro domain. The segment at 2183–2565 (LTHVNKFKIV…IMLPVFVIIL (383 aa)) is HD1. The next 10 membrane-spanning stretches (helical) occupy residues 2191–2211 (IVVY…DFSL), 2219–2239 (VFLL…LGLV), 2266–2286 (GVHW…DFFV), 2411–2431 (ALWF…PLMF), 2521–2541 (VAVS…IVVL), 2546–2566 (FVWF…IILF), 2769–2789 (VMLI…FMVG), 2937–2957 (IISP…FLFL), 2986–3006 (VLFV…LALW), and 3022–3042 (LFIL…GFVF). The segment at 2769–3042 (VMLIIALGAI…FVLIVGGFVF (274 aa)) is HD2. Residues histidine 3184, glutamate 3222, and serine 3291 each act as charge relay system; for 3C-like serine proteinase activity in the active site. The next 7 helical transmembrane spans lie at 3422–3442 (SNVS…FLVC), 3456–3478 (VVLP…VLFW), 3486–3506 (LAVT…LGLF), 3514–3534 (VGLI…VVVN), 3538–3558 (AIFV…LGVV), 3573–3593 (AVFA…LILF), and 3598–3613 (LMSF…FRVF). Residues 3430–3613 (NLHFIFSVYF…VVIVLSFRVF (184 aa)) form an HD3 region. The 232-residue stretch at 4442 to 4673 (DFKLLRDVWC…AKEMNVPADF (232 aa)) folds into the NiRAN domain. A RdRp catalytic domain is found at 4981–5132 (FDVFGSDYTK…FSKPGALKIF (152 aa)). The 116-residue stretch at 5289 to 5404 (FDRVCFCCPN…NGVAQLLTPV (116 aa)) folds into the CV ZBD domain. Positions 5293, 5296, 5304, 5307, 5314, 5317, 5321, 5327, 5336, 5338, 5359, and 5362 each coordinate Zn(2+). Residues 5509-5688 (NQPWRLATCF…LQLATQKRYL (180 aa)) enclose the (+)RNA virus helicase ATP-binding domain. One can recognise a (+)RNA virus helicase C-terminal domain in the interval 5689–5848 (TACYRCPPQI…FGMEKQSDFN (160 aa)). Residues 5846–6059 (DFNIIPEVAS…YLASYDAAFK (214 aa)) form the ExoN domain. Residues aspartate 5860, glutamate 5862, and aspartate 5961 contribute to the active site. Zn(2+) is bound by residues histidine 6025, cysteine 6029, and histidine 6033. Residues histidine 6037 and aspartate 6042 contribute to the active site. Residue cysteine 6048 participates in Zn(2+) binding. In terms of domain architecture, NendoU spans 6327-6467 (LPETLFSTGR…GEDDIQTFYP (141 aa)). Active-site residues include histidine 6363, histidine 6380, lysine 6412, lysine 6509, aspartate 6585, lysine 6613, and glutamate 6647. The Nidovirus-type SAM-dependent 2'-O-MTase domain maps to 6469–6733 (KEFIRSYYEW…EVPLLCQMKH (265 aa)).

Specific enzymatic cleavages in vivo by its own protease yield mature proteins. 3CL-PRO is autocatalytically processed.

It localises to the host membrane. The enzyme catalyses RNA(n) + a ribonucleoside 5'-triphosphate = RNA(n+1) + diphosphate. It catalyses the reaction ATP + H2O = ADP + phosphate + H(+). The 3C-like serine proteinase is responsible for the majority of cleavages. Functionally, the helicase which contains a zinc finger structure displays RNA and DNA duplex-unwinding activities with 5' to 3' polarity. Its function is as follows. Acts on both ssRNA and dsRNA in a 3' to 5' direction. In terms of biological role, nendoU is a Mn(2+)-dependent, uridylate-specific enzyme, which leaves 2'-3'-cyclic phosphates 5' to the cleaved bond. The sequence is that of Replicase polyprotein 1ab (rep) from Bos taurus (Bovine).